The primary structure comprises 167 residues: Ureidoglycolate lyase (167 aa).

The protein belongs to the ureidoglycolate lyase family. As to quaternary structure, homodimer. Ni(2+) serves as cofactor.

The enzyme catalyses (S)-ureidoglycolate = urea + glyoxylate. It functions in the pathway nitrogen metabolism; (S)-allantoin degradation. Functionally, catalyzes the catabolism of the allantoin degradation intermediate (S)-ureidoglycolate, generating urea and glyoxylate. Involved in the utilization of allantoin as nitrogen source. The chain is Ureidoglycolate lyase from Pseudomonas putida (strain W619).